Consider the following 574-residue polypeptide: Adenine deaminase (574 aa).

It belongs to the metallo-dependent hydrolases superfamily. Adenine deaminase family. Mn(2+) serves as cofactor.

The enzyme catalyses adenine + H2O + H(+) = hypoxanthine + NH4(+). This chain is Adenine deaminase, found in Thermosipho melanesiensis (strain DSM 12029 / CIP 104789 / BI429).